A 290-amino-acid chain; its full sequence is Protease HtpX homolog (290 aa).

2 helical membrane-spanning segments follow: residues 4–24 and 39–59; these read IFLF…VLSL and PMLL…SLLI. His144 contacts Zn(2+). The active site involves Glu145. Zn(2+) is bound at residue His148. 2 consecutive transmembrane segments (helical) span residues 159–179 and 197–217; these read LVQG…GYFV and ITVI…VAWF. Glu222 is a binding site for Zn(2+).

This sequence belongs to the peptidase M48B family. Zn(2+) serves as cofactor.

It localises to the cell inner membrane. The chain is Protease HtpX homolog from Janthinobacterium sp. (strain Marseille) (Minibacterium massiliensis).